A 256-amino-acid chain; its full sequence is Expansin-like B1 (256 aa).

Residues 1–24 (MAQLLRRHLPVILSLILFLSKATA) form the signal peptide. N27 is a glycosylation site (N-linked (GlcNAc...) asparagine). An Expansin-like EG45 domain is found at 46 to 150 (NGACEYGAFG…RRVSCTYPNK (105 aa)). Residues 164–249 (NYLEFEIWYQ…NWTAGATYDS (86 aa)) enclose the Expansin-like CBD domain. 2 N-linked (GlcNAc...) asparagine glycosylation sites follow: N189 and N240.

This sequence belongs to the expansin family. Expansin-like B subfamily.

Its subcellular location is the secreted. The protein is Expansin-like B1 (EXLB1) of Oryza sativa subsp. japonica (Rice).